Consider the following 124-residue polypeptide: uncharacterized protein (124 aa).

It belongs to the asfivirus H124R family.

Its subcellular location is the virion. This is an uncharacterized protein from Ornithodoros (relapsing fever ticks).